The sequence spans 430 residues: Septin-14 (430 aa).

Positions 48–313 (KGFSFNILCV…ECYRSNRLQK (266 aa)) constitute a Septin-type G domain. The segment at 58–65 (GETGIGKT) is G1 motif. Residues 58 to 65 (GETGIGKT), Gly-113, 194 to 202 (KADSLSKND), Gly-246, and Arg-261 each bind GTP. A G3 motif region spans residues 110–113 (KTVG). Positions 193 to 196 (AKAD) are G4 motif. Residues 329 to 410 (QEMYEAKRRE…IIDFYKMKAA (82 aa)) adopt a coiled-coil conformation. Positions 367–430 (DAEKELQDKF…NIKKDKDRKK (64 aa)) are required for interaction with SEPTIN4. Required for migration of cortical neurons during corticogenesis.

Belongs to the TRAFAC class TrmE-Era-EngA-EngB-Septin-like GTPase superfamily. Septin GTPase family. As to quaternary structure, septins polymerize into heterooligomeric protein complexes that form filaments, and can associate with cellular membranes, actin filaments and microtubules. GTPase activity is required for filament formation. Interacts with ACTN4. Interacts with SEPTIN9. Interacts (via C-terminus) with SEPTIN4. In terms of tissue distribution, expressed in the testis and brain including the cerebrum, hippocampus and cerebellum (at protein level).

Its subcellular location is the cytoplasm. The protein localises to the cytoskeleton. It is found in the cell projection. It localises to the axon. The protein resides in the dendrite. Its subcellular location is the perikaryon. The protein localises to the perinuclear region. It is found in the cytoplasmic vesicle. It localises to the secretory vesicle. The protein resides in the acrosome. Its function is as follows. Filament-forming cytoskeletal GTPase. Involved in the migration of cortical neurons and the formation of neuron leading processes during embryonic development. Plays a role in sperm head formation during spermiogenesis, potentially via facilitating localization of ACTN4 to cell filaments. The sequence is that of Septin-14 from Mus musculus (Mouse).